A 292-amino-acid chain; its full sequence is uncharacterized protein (292 aa).

Residues 1-59 (MTITQLKVFVKIAETGSFTKAGQALNMTQPAVSHAISAIEAELDVKLIIRDRRNGLMLT) form the HTH lysR-type domain. The H-T-H motif DNA-binding region spans 18 to 37 (FTKAGQALNMTQPAVSHAIS).

Belongs to the LysR transcriptional regulatory family.

This is an uncharacterized protein from Bacillus subtilis (strain 168).